A 619-amino-acid polypeptide reads, in one-letter code: DNA mismatch repair protein MutL (619 aa).

It belongs to the DNA mismatch repair MutL/HexB family.

This protein is involved in the repair of mismatches in DNA. It is required for dam-dependent methyl-directed DNA mismatch repair. May act as a 'molecular matchmaker', a protein that promotes the formation of a stable complex between two or more DNA-binding proteins in an ATP-dependent manner without itself being part of a final effector complex. This Xylella fastidiosa (strain 9a5c) protein is DNA mismatch repair protein MutL.